The chain runs to 210 residues: ATP phosphoribosyltransferase (210 aa).

This sequence belongs to the ATP phosphoribosyltransferase family. Short subfamily. Heteromultimer composed of HisG and HisZ subunits.

Its subcellular location is the cytoplasm. It catalyses the reaction 1-(5-phospho-beta-D-ribosyl)-ATP + diphosphate = 5-phospho-alpha-D-ribose 1-diphosphate + ATP. The protein operates within amino-acid biosynthesis; L-histidine biosynthesis; L-histidine from 5-phospho-alpha-D-ribose 1-diphosphate: step 1/9. Functionally, catalyzes the condensation of ATP and 5-phosphoribose 1-diphosphate to form N'-(5'-phosphoribosyl)-ATP (PR-ATP). Has a crucial role in the pathway because the rate of histidine biosynthesis seems to be controlled primarily by regulation of HisG enzymatic activity. This is ATP phosphoribosyltransferase from Caldanaerobacter subterraneus subsp. tengcongensis (strain DSM 15242 / JCM 11007 / NBRC 100824 / MB4) (Thermoanaerobacter tengcongensis).